A 329-amino-acid polypeptide reads, in one-letter code: Glycerol-3-phosphate dehydrogenase [NAD(P)+] (329 aa).

NADPH contacts are provided by Trp-11, Arg-30, and Lys-103. Positions 103, 132, and 134 each coordinate sn-glycerol 3-phosphate. Position 136 (Ala-136) interacts with NADPH. Sn-glycerol 3-phosphate is bound by residues Lys-187, Asp-240, Ser-250, Arg-251, and Asn-252. Residue Lys-187 is the Proton acceptor of the active site. An NADPH-binding site is contributed by Arg-251. 2 residues coordinate NADPH: Val-275 and Glu-277.

The protein belongs to the NAD-dependent glycerol-3-phosphate dehydrogenase family.

It localises to the cytoplasm. The enzyme catalyses sn-glycerol 3-phosphate + NAD(+) = dihydroxyacetone phosphate + NADH + H(+). It catalyses the reaction sn-glycerol 3-phosphate + NADP(+) = dihydroxyacetone phosphate + NADPH + H(+). Its pathway is membrane lipid metabolism; glycerophospholipid metabolism. Its function is as follows. Catalyzes the reduction of the glycolytic intermediate dihydroxyacetone phosphate (DHAP) to sn-glycerol 3-phosphate (G3P), the key precursor for phospholipid synthesis. This chain is Glycerol-3-phosphate dehydrogenase [NAD(P)+], found in Nitrosomonas europaea (strain ATCC 19718 / CIP 103999 / KCTC 2705 / NBRC 14298).